The following is a 334-amino-acid chain: MSDQANQGDLEIRPSPLLTVINDLHSKYKSLKEGIVANYIPELAKVNPDLFSISIVTVDGQVYQVGDYQQLFTIQSISKVFAYGLALEDHGRDYVLTRVGVEPTGEAFNSIILDEQSKRPYNPMVNAGAIATTSLIKGAGATERLNRVLEMFRRYIGHDVFVDISVFTSERSTGHRNRAMAHLMLNFGMIDRNLEEALDLYFQQCAVMVNCHDLAVMAATLANRGVNPVTGEQAVNSRYIKDILSVMYTCGMYNFAGEWAYKVGIPAKSGVCGGIMAVVPNQMGIAVFSPPLDIRGNSVRGVKVCEELSQQLGLHLFECVKVENGKWGVGNCEC.

Positions 76, 126, 170, 177, 201, 253, and 271 each coordinate substrate.

The protein belongs to the glutaminase family. Homotetramer.

The catalysed reaction is L-glutamine + H2O = L-glutamate + NH4(+). This Trichormus variabilis (strain ATCC 29413 / PCC 7937) (Anabaena variabilis) protein is Glutaminase.